The chain runs to 776 residues: Zinc finger CCCH-type antiviral protein 1 (776 aa).

A2 carries the N-acetylalanine modification. The segment at 2–254 (ADPGVCCFIT…DRSKSRDRFL (253 aa)) is N-terminal domain. The Nuclear localization signal motif lies at 69-76 (RARVCRRK). 4 consecutive C3H1-type zinc fingers follow at residues 73 to 86 (CRRK…DSLH), 88 to 110 (CKLN…KYSH), 150 to 172 (CKSY…ERLH), and 169 to 193 (ERLH…SHNL). The segment at 221–249 (NKHARRNPPGTRAAHPHRRGGAHRDRSKS) is disordered. The tract at residues 224–254 (ARRNPPGTRAAHPHRRGGAHRDRSKSRDRFL) is binding to EXOSC5. Phosphoserine; by GSK3-beta is present on residues S257, S262, S266, and S270. S274 is modified (phosphoserine). T278 is subject to Phosphothreonine. Position 283 is a phosphoserine (S283). The Nuclear export signal motif lies at 284–291 (LEDVSVDV). The tract at residues 308–355 (PVSSKAAGVQGPSQMRASQEFSEDGNLDDIFSRNRSDSSSSRASAAKV) is disordered. A compositionally biased stretch (polar residues) spans 318 to 327 (GPSQMRASQE). A phosphoserine mark is found at S325, S351, and S398. Low complexity predominate over residues 344–353 (DSSSSRASAA). Positions 405 to 406 (KK) match the Nuclear localization signal motif. The tract at residues 457-483 (WASASTHNAPNGSSQIMDETPNVSKSS) is disordered. A compositionally biased stretch (polar residues) spans 459–483 (SASTHNAPNGSSQIMDETPNVSKSS). Y501 carries the phosphotyrosine modification. The segment at 512–562 (LAVPGEATTPVQSNRLPQSPLSSSSHRAAASGSPGKNSTHTSVSPAIESSR) is disordered. Residues 523-546 (QSNRLPQSPLSSSSHRAAASGSPG) are compositionally biased toward low complexity. Phosphoserine occurs at positions 544 and 667. The WWE domain maps to 671–758 (YEEKPLSAVF…ASKTQRHVVR (88 aa)).

This sequence belongs to the ARTD/PARP family. As to quaternary structure, homodimer or homooligomer. Homooligomerization is essential for its antiviral activity. Interacts with EXOSC5. Interacts with EXOSC3, EXOSC7, DCP2 and DCP1A. Interacts with PARN in an RNA-independent manner. Interacts with XRN1 in an RNA-dependent manner. Interacts (via N-terminal domain) with DHX30 (via N-terminus) in an RNA-independent manner. Interacts (via N-terminal domain) with DDX17 in an RNA-independent manner. In terms of processing, phosphorylation at Ser-274 is essential for sequential phosphorylation of Ser-270, Ser-266, Ser-262 and Ser-257 by GSK3-beta. Phosphorylation by GSK3-beta enhances its antiviral activity. Expressed in the kidney and liver.

Its subcellular location is the cytoplasm. The protein localises to the nucleus. Functionally, antiviral protein which inhibits the replication of viruses by recruiting the cellular RNA degradation machineries to degrade the viral mRNAs. Binds to a ZAP-responsive element (ZRE) present in the target viral mRNA, recruits cellular poly(A)-specific ribonuclease PARN to remove the poly(A) tail, and the 3'-5' exoribonuclease complex exosome to degrade the RNA body from the 3'-end. It also recruits the decapping complex DCP1-DCP2 through RNA helicase p72 (DDX17) to remove the cap structure of the viral mRNA to initiate its degradation from the 5'-end. Its target viruses belong to families which include retroviridae: human immunodeficiency virus type 1 (HIV-1) and moloney and murine leukemia virus (MoMLV), filoviridae: ebola virus (EBOV) and marburg virus (MARV), togaviridae: sindbis virus (SINV) and Ross river virus (RRV). Specifically targets the multiply spliced but not unspliced or singly spliced HIV-1 mRNAs for degradation. The polypeptide is Zinc finger CCCH-type antiviral protein 1 (Zc3hav1) (Rattus norvegicus (Rat)).